A 67-amino-acid chain; its full sequence is Putative cytosolic sulfotransferase 2 (67 aa).

3'-phosphoadenylyl sulfate is bound at residue 31–33 (RDG).

It belongs to the sulfotransferase 1 family.

The protein resides in the cytoplasm. Sulfotransferase that utilizes 3'-phospho-5'-adenylyl sulfate (PAPS) as sulfonate donor. The sequence is that of Putative cytosolic sulfotransferase 2 (SOT2) from Arabidopsis thaliana (Mouse-ear cress).